Here is a 126-residue protein sequence, read N- to C-terminus: Histone H2B 1/2/3/4/6 (126 aa).

A compositionally biased stretch (low complexity) spans 1–12 (MPEPAKSAPAPK). Residues 1–36 (MPEPAKSAPAPKKGSKKAVTKTQKKGDKKRKKSRKE) are disordered. Lysine 6 and lysine 13 each carry N6-acetyllysine. A compositionally biased stretch (basic residues) spans 13 to 34 (KGSKKAVTKTQKKGDKKRKKSR). Residue serine 15 is modified to Phosphoserine. N6-acetyllysine is present on residues lysine 16 and lysine 21. A Glycyl lysine isopeptide (Lys-Gly) (interchain with G-Cter in ubiquitin) cross-link involves residue lysine 121.

This sequence belongs to the histone H2B family. As to quaternary structure, the nucleosome is a histone octamer containing two molecules each of H2A, H2B, H3 and H4 assembled in one H3-H4 heterotetramer and two H2A-H2B heterodimers. The octamer wraps approximately 147 bp of DNA. Post-translationally, monoubiquitination of Lys-121 by the BRE1 gives a specific tag for epigenetic transcriptional activation and is also prerequisite for histone H3 'Lys-4' and 'Lys-79' methylation. Phosphorylated on Ser-15 during apoptosis; which facilitates apoptotic chromatin condensation.

The protein localises to the nucleus. It is found in the chromosome. Functionally, core component of nucleosome. Nucleosomes wrap and compact DNA into chromatin, limiting DNA accessibility to the cellular machineries which require DNA as a template. Histones thereby play a central role in transcription regulation, DNA repair, DNA replication and chromosomal stability. DNA accessibility is regulated via a complex set of post-translational modifications of histones, also called histone code, and nucleosome remodeling. In terms of biological role, has broad-spectrum antibacterial activity. May be important in the antimicrobial defenses of chick reproductive system during follicle development in the ovary and egg formation in the oviduct. The polypeptide is Histone H2B 1/2/3/4/6 (H2B-I) (Gallus gallus (Chicken)).